Here is a 1180-residue protein sequence, read N- to C-terminus: MTGQLIQYGRHRQRRSYARINEVLELPNLIEIQTASYQWFLDEGLREMFQDISPIQDFTGNLVLEFIDYSLGEPKYPVDESKERDVTYAAPLRVKVRLINKETGEVKEQEVFMGDFPLMTDTGTFIINGAERVIVSQLVRSPSVYYSEKIDKNGKKGYTATVIPNRGAWLELETDAKDIVYVRIDRTRKIPVTVLLRALGFGSDQEIIDLLGEDEYLRNTLEKDNTDSAEKALLEIYERLRPGEPPTVENAKSLLDSRFFDPKRYDLANVGRYKVNKKLHIKNRLFNQRLAETLIDPETGEVIAEEGSIIDRRTLDRILPYLENNVGFRTVRMSGGVVEEDEVRLQSVKIYAPDDQDGEHVIRVIGNGLVEKEIKHITPADIIASINYFFNLLHSVGGTDDIDHLGNRRLRSVGELLQNQFRIGLSRMERVVRERMSIQDPNSITPQALINIRPVIASIKEFFGSSQLSQFMDQTNPLAELTHKRRLSALGPGGLTRERAGFEVRDVHYSHYGRMCPIETPEGPNIGLINSLSTYAKVNEFGFMETPYRRVDPETGKVTAQIDYLTADEEDNYVVAQANMKLAEDGSFIDENIIARFRGENIVVSRDRVDYMDVSPKQVVSAATSCIPFLENDDSNRALMGANMQRQAVPLLVPEAPIVGTGMEHVSAKDSGAAIVSKHRGIVERVTAKEIWVRRLEEVDGKEIKGDLDKYRLQKFIRSNQGTSYNQRPIVKEGDVVEKREILADGPSMEKGEMALGRNVLVGFMTWEGYNYEDAIILSERLVKDDVYTSIHIEEYESEARDTKLGPEEITRDIPNVGEDALRNLDERGIIRVGAEVKDGDILVGKVTPKGVTELTAEERLLHAIFGEKAREVRDTSLRAPHGGDGIVLDVKIFNREDGDELPPGVNQLVRVYIVQKRKIHEGDKMAGRHGNKGVISRILPEEDMPYLPDGTPIDIMLNPLGVPSRMNIGQVLELHLGMAARRLGLHVASPVFDGASEEDVWATLEEAGMARDGKTILYDGRTGEPFDNRVSVGIMYMIKLAHMVDDKLHARSTGPYSLVTQQPLGGKAQFGGQRFGEMEVWALEAYGAAYTLQEILTVKSDDVVGRVKTYEAIVKGENVPEPGVPESFKVLIKELQSLGMDVKMLSSTEEEIEMKELDDEDEQASDKLNLNIDSTESNV.

Positions Glu1154–Gln1164 are enriched in acidic residues. The segment at Glu1154–Val1180 is disordered. Residues Asp1167–Val1180 are compositionally biased toward polar residues.

It belongs to the RNA polymerase beta chain family. The RNAP catalytic core consists of 2 alpha, 1 beta, 1 beta' and 1 omega subunit. When a sigma factor is associated with the core the holoenzyme is formed, which can initiate transcription.

The enzyme catalyses RNA(n) + a ribonucleoside 5'-triphosphate = RNA(n+1) + diphosphate. Functionally, DNA-dependent RNA polymerase catalyzes the transcription of DNA into RNA using the four ribonucleoside triphosphates as substrates. In Halalkalibacterium halodurans (strain ATCC BAA-125 / DSM 18197 / FERM 7344 / JCM 9153 / C-125) (Bacillus halodurans), this protein is DNA-directed RNA polymerase subunit beta.